The primary structure comprises 353 residues: Probable transport protein YPL264C (353 aa).

The Cytoplasmic portion of the chain corresponds to 1–16 (MTLQRISKDYLKPNYG). A helical membrane pass occupies residues 17 to 37 (LILLIVSYFFNSSMVVSTKVL). Residues 24-160 (YFFNSSMVVS…SFSGVVLIIR (137 aa)) form the EamA 1 domain. At 38–51 (ENDPLETSQSRINP) the chain is on the extracellular side. A helical membrane pass occupies residues 52–69 (LQILLVRMSITYCCTLVY). At 70–94 (MHWNKQSVPDIPWGPAPCRKWLILR) the chain is on the cytoplasmic side. Residues 95-115 (GIMGFFGVFGMYFSLMYLSIS) form a helical membrane-spanning segment. Residue aspartate 116 is a topological domain, extracellular. Residues 117–137 (AVLITFMSPTLTIFLSFLLLG) form a helical membrane-spanning segment. The Cytoplasmic segment spans residues 138–144 (EPFSKLE). The chain crosses the membrane as a helical span at residues 145–165 (ALGSLISFSGVVLIIRPTFLF). Topologically, residues 166–188 (GEQTQGQQSPQDDIVETQNPKLR) are extracellular. Residues 189–209 (LIAIGVSLLGVCGLSSVYIII) form a helical membrane-spanning segment. The EamA 2 domain maps to 200–326 (CGLSSVYIII…IVSSTIWVIN (127 aa)). The Cytoplasmic portion of the chain corresponds to 210–218 (RYIGNKAHA). Residues 219–239 (IMSVSYFSLVTTVVAALGVLL) form a helical membrane-spanning segment. Topologically, residues 240-254 (IPSMSLQLPHSWKQW) are extracellular. Residues 255 to 275 (GLFLNLGISGFIHQILLTMGI) traverse the membrane as a helical segment. Over 276–282 (QRERAGR) the chain is Cytoplasmic. The helical transmembrane segment at 283-303 (GSLMTYTQVIYAVFWDVVLFH) threads the bilayer. Residue histidine 304 is a topological domain, extracellular. A helical membrane pass occupies residues 305 to 325 (WPNIWTWCGMAVIVSSTIWVI). Residues 326 to 353 (NMRASKQNVVATAELLSTSDFELDDLED) are Cytoplasmic-facing.

The protein localises to the membrane. In Saccharomyces cerevisiae (strain ATCC 204508 / S288c) (Baker's yeast), this protein is Probable transport protein YPL264C.